The chain runs to 249 residues: Fatty acid elongase 5 (249 aa).

The next 3 membrane-spanning stretches (helical) occupy residues 23–43 (VFVN…VIVL), 68–88 (VALS…GVFN), and 100–120 (WIFV…FIVL). The HxxHH motif signature appears at 131–135 (HIYHH). Residue His134 is the Nucleophile of the active site. Transmembrane regions (helical) follow at residues 138–158 (IGFI…AFFG), 159–179 (AWIN…TSLG), 193–213 (MIQF…HSPI), and 217–236 (WAVL…MRFY).

This sequence belongs to the ELO family.

Its subcellular location is the membrane. The enzyme catalyses an acyl-CoA + malonyl-CoA + H(+) = a 3-oxoacyl-CoA + CO2 + CoA. It functions in the pathway lipid metabolism; polyunsaturated fatty acid biosynthesis. In terms of biological role, involved in the synthesis of fatty acids. Elongates C20 polyunsaturated fatty acids (PUFAs) with a preference for n-6 PUFAs. This is Fatty acid elongase 5 from Leishmania major.